We begin with the raw amino-acid sequence, 437 residues long: MAAGTLYTYPENWRAFKALIAAQYSGAQVRVLSAPPHFHFGQTNRTPEFLRKFPAGKVPAFEGDDGFCVFESNAIAYYVSNEELRGSTPEAAAQVVQWVSFADSDIVPPASTWVFPTLGIMHHNKQATENAKEEVRRILGLLDAHLKTRTFLVGERVTLADITVVCTLLWLYKQVLEPSFRQAFPNTNRWFLTCINQPQFRAVLGEVKLCEKMAQFDAKKFAETQPKKDTPRKEKGSREEKQKPQAERKEEKKAAAPAPEEEMDECEQALAAEPKAKDPFAHLPKSTFVLDEFKRKYSNEDTLSVALPYFWEHFDKDGWSLWYSEYRFPEELTQTFMSCNLITGMFQRLDKLRKNAFASVILFGTNNSSSISGVWVFRGQELAFPLSPDWQVDYESYTWRKLDPGSEETQTLVREYFSWEGAFQHVGKAFNQGKIFK.

A2 carries the N-acetylalanine modification. Positions 2–87 (AAGTLYTYPE…YVSNEELRGS (86 aa)) constitute a GST N-terminal domain. The 129-residue stretch at 88 to 216 (TPEAAAQVVQ…VKLCEKMAQF (129 aa)) folds into the GST C-terminal domain. N6-acetyllysine is present on residues K147 and K212. A compositionally biased stretch (basic and acidic residues) spans 221–254 (FAETQPKKDTPRKEKGSREEKQKPQAERKEEKKA). Residues 221–268 (FAETQPKKDTPRKEKGSREEKQKPQAERKEEKKAAAPAPEEEMDECEQ) are disordered. A Glycyl lysine isopeptide (Lys-Gly) (interchain with G-Cter in SUMO1) cross-link involves residue K253. Residues 276-437 (AKDPFAHLPK…KAFNQGKIFK (162 aa)) enclose the EF-1-gamma C-terminal domain. K285 is covalently cross-linked (Glycyl lysine isopeptide (Lys-Gly) (interchain with G-Cter in SUMO2)). N6-acetyllysine is present on K401. K434 carries the post-translational modification N6-acetyllysine; alternate. N6-malonyllysine; alternate is present on K434.

In terms of assembly, EF-1 is composed of four subunits: alpha, beta, delta, and gamma.

Its function is as follows. Probably plays a role in anchoring the complex to other cellular components. The sequence is that of Elongation factor 1-gamma (EEF1G) from Macaca fascicularis (Crab-eating macaque).